The primary structure comprises 70 residues: Putative membrane protein insertion efficiency factor (70 aa).

This sequence belongs to the UPF0161 family.

It localises to the cell inner membrane. In terms of biological role, could be involved in insertion of integral membrane proteins into the membrane. This is Putative membrane protein insertion efficiency factor from Rhizorhabdus wittichii (strain DSM 6014 / CCUG 31198 / JCM 15750 / NBRC 105917 / EY 4224 / RW1) (Sphingomonas wittichii).